Here is a 418-residue protein sequence, read N- to C-terminus: MAEQLAFLIGGIIGGLLLLIGVSCCLWRRFCATFTYEELPETSDPATISYFSRKEDRLYQYSGTPPGRLPSVPFVVPPSHQGRDWVPLHGGDWAVAPQDPCPVPEHMACTSSAKPGDACEMGSINPELYKSPEDTSETGFPDGCLGRLWFSVEYQQESERLLVGLIKAQQLQVPSETCSTLVKLHLLPDERRFLQSKTKHKICNPQFDENFIFQVSSKSVTQRVLKFSVYHVNKKRKHQLLGQVLFPLKNETLAGDHHRIIWRDLEAKNLEPPSEFGDIQFCLSYNDYLSRLTVVVLRAKGLQLQEDRSVVSVFVKVSLMNHNKFVKCKRTSAVLGSVNPVYNETFSFKVDTNELDTASLSLVVLQTTEGNKSSPLGRVVVGPYMYTRGKELEHWGEMLRKPKELVKRWHALCRPTEP.

Residues 1–4 (MAEQ) are Extracellular-facing. Residues 5 to 27 (LAFLIGGIIGGLLLLIGVSCCLW) form a helical; Signal-anchor for type III membrane protein membrane-spanning segment. Residues 28–418 (RRFCATFTYE…WHALCRPTEP (391 aa)) lie on the Cytoplasmic side of the membrane. 2 consecutive C2 domains span residues 144 to 261 (CLGR…HRII) and 275 to 396 (EFGD…EHWG).

It belongs to the synaptotagmin family. In terms of assembly, homodimer. As to expression, isoform 1 and isoform 2 are expressed in heart, lung, skeletal muscle and testis; not detected in brain, liver and kidney. Isoform 1 is expressed in spleen.

It is found in the membrane. Its function is as follows. May be involved in the trafficking and exocytosis of secretory vesicles in non-neuronal tissues. This chain is Synaptotagmin-15 (Syt15), found in Mus musculus (Mouse).